A 907-amino-acid chain; its full sequence is Catenin alpha-1 (907 aa).

Residues 870-879 show a composition bias toward basic and acidic residues; that stretch reads VKREKLDDGQ. The segment at 870 to 895 is disordered; that stretch reads VKREKLDDGQTNKVKRSSQKKHINPV. The span at 882–892 shows a compositional bias: basic residues; sequence KVKRSSQKKHI.

This sequence belongs to the vinculin/alpha-catenin family. Interacts with ctnnb1, jupa and cdh2. Interacts with cdh1 during early stages of oogenesis, interaction is no longer present when oocyte develops into the unfertilized egg. In terms of tissue distribution, expressed in the skin (at protein level). Expressed in the ovary.

The protein resides in the cell junction. The protein localises to the adherens junction. It localises to the cytoplasm. It is found in the cytoskeleton. Its subcellular location is the cell membrane. The protein resides in the nucleus. Functionally, associates with the cytoplasmic domain of a variety of cadherins, forming catenin and cadherin complexes which are further linked to the actin filament network and is thereby involved in cell-cell adhesion. Required for embryonic development, via maintenance of adherens junctions that facilitate the maintenance of the epithelial barrier. In Danio rerio (Zebrafish), this protein is Catenin alpha-1.